The sequence spans 330 residues: mRNA-capping enzyme (330 aa).

Residue Lys-82 is the N6-GMP-lysine intermediate of the active site.

This sequence belongs to the eukaryotic GTase family. As to quaternary structure, monomer. Requires Mg(2+) as cofactor. The cofactor is Mn(2+).

It carries out the reaction a 5'-end diphospho-ribonucleoside in mRNA + GTP + H(+) = a 5'-end (5'-triphosphoguanosine)-ribonucleoside in mRNA + diphosphate. Functionally, mRNA capping. Transfers a GMP cap onto the end of mRNA that terminates with a 5'-diphosphate tail. The protein is mRNA-capping enzyme of Chlorella (PBCV-1).